The sequence spans 297 residues: Bifunctional protein FolD (297 aa).

NADP(+)-binding positions include 164 to 166 (GRS), serine 193, and isoleucine 234.

This sequence belongs to the tetrahydrofolate dehydrogenase/cyclohydrolase family. As to quaternary structure, homodimer.

It catalyses the reaction (6R)-5,10-methylene-5,6,7,8-tetrahydrofolate + NADP(+) = (6R)-5,10-methenyltetrahydrofolate + NADPH. It carries out the reaction (6R)-5,10-methenyltetrahydrofolate + H2O = (6R)-10-formyltetrahydrofolate + H(+). It participates in one-carbon metabolism; tetrahydrofolate interconversion. Its function is as follows. Catalyzes the oxidation of 5,10-methylenetetrahydrofolate to 5,10-methenyltetrahydrofolate and then the hydrolysis of 5,10-methenyltetrahydrofolate to 10-formyltetrahydrofolate. The sequence is that of Bifunctional protein FolD from Halobacterium salinarum (strain ATCC 700922 / JCM 11081 / NRC-1) (Halobacterium halobium).